The following is a 91-amino-acid chain: Large ribosomal subunit protein bL27 (91 aa).

A compositionally biased stretch (polar residues) spans M1 to G13. Positions M1–R20 are disordered.

It belongs to the bacterial ribosomal protein bL27 family.

This Anaplasma phagocytophilum (strain HZ) protein is Large ribosomal subunit protein bL27.